The sequence spans 346 residues: Structure-specific endonuclease subunit SLX1 (346 aa).

The region spanning 10–92 (ALYCVYILRS…TNPHTSLHIP (83 aa)) is the GIY-YIG domain. The segment at 238–296 (CVVCKEEIDPEEGGLHAVCSNEGCEGVGHLRCWGRYLLKSEEGGGEGAILPVGGRCPRC) adopts an SLX1-type zinc-finger fold. Residues 324 to 336 (KVKRKRAPRKKTA) are compositionally biased toward basic residues. Residues 324-346 (KVKRKRAPRKKTAKTKETREEDG) form a disordered region. A compositionally biased stretch (basic and acidic residues) spans 337-346 (KTKETREEDG).

Belongs to the SLX1 family. Forms a heterodimer with SLX4. Requires a divalent metal cation as cofactor.

Its subcellular location is the nucleus. In terms of biological role, catalytic subunit of the SLX1-SLX4 structure-specific endonuclease that resolves DNA secondary structures generated during DNA repair and recombination. Has endonuclease activity towards branched DNA substrates, introducing single-strand cuts in duplex DNA close to junctions with ss-DNA. The sequence is that of Structure-specific endonuclease subunit SLX1 from Podospora anserina (strain S / ATCC MYA-4624 / DSM 980 / FGSC 10383) (Pleurage anserina).